A 71-amino-acid polypeptide reads, in one-letter code: Large ribosomal subunit protein bL31 (71 aa).

Cys16, Cys18, Cys37, and Cys40 together coordinate Zn(2+).

Belongs to the bacterial ribosomal protein bL31 family. Type A subfamily. In terms of assembly, part of the 50S ribosomal subunit. Zn(2+) is required as a cofactor.

Functionally, binds the 23S rRNA. This Chromohalobacter salexigens (strain ATCC BAA-138 / DSM 3043 / CIP 106854 / NCIMB 13768 / 1H11) protein is Large ribosomal subunit protein bL31.